Consider the following 538-residue polypeptide: Putative cysteine ligase BshC (538 aa).

The protein belongs to the BshC family.

Involved in bacillithiol (BSH) biosynthesis. May catalyze the last step of the pathway, the addition of cysteine to glucosamine malate (GlcN-Mal) to generate BSH. The chain is Putative cysteine ligase BshC from Halalkalibacterium halodurans (strain ATCC BAA-125 / DSM 18197 / FERM 7344 / JCM 9153 / C-125) (Bacillus halodurans).